The following is a 627-amino-acid chain: (+)-sabinene synthase, chloroplastic (627 aa).

Residues 1 to 46 constitute a chloroplast transit peptide; the sequence is MSVISIVPLASNSCLYKSLMSSTHELKALCRPIATLGMCRRGKSVM. Residues Asp-378, Asp-382, and Asp-530 each contribute to the Mg(2+) site. The DDXXD motif signature appears at 378-382; the sequence is DDIYD.

Belongs to the terpene synthase family. Tpsd subfamily. In terms of assembly, monomer. It depends on Mg(2+) as a cofactor.

The protein localises to the plastid. Its subcellular location is the chloroplast. The enzyme catalyses (2E)-geranyl diphosphate = (1R,5R)-sabinene + diphosphate. Its pathway is terpene metabolism; oleoresin biosynthesis. In terms of biological role, terpene synthase (TPS) involved in defensive oleoresin formation in conifers in response to insect attack (e.g. white pine weevil P.strobi) or other injury. Produces (+)-sabinene from geranyl diphosphate, but has no activity with geranylgeranyl diphosphate or farnesyl diphosphate. The protein is (+)-sabinene synthase, chloroplastic (TPS-sab) of Picea sitchensis (Sitka spruce).